The chain runs to 174 residues: Shikimate kinase 2 (174 aa).

Position 12 to 17 (12 to 17 (GCGKTT)) interacts with ATP. The Mg(2+) site is built by T16 and D32. Positions 34, 58, and 79 each coordinate substrate. The interval 112–126 (EAYPLADQRPTLTGR) is LID domain. An ATP-binding site is contributed by R120. R139 lines the substrate pocket. An ATP-binding site is contributed by Q155.

It belongs to the shikimate kinase family. AroL subfamily. Monomer. The cofactor is Mg(2+).

It localises to the cytoplasm. The enzyme catalyses shikimate + ATP = 3-phosphoshikimate + ADP + H(+). The protein operates within metabolic intermediate biosynthesis; chorismate biosynthesis; chorismate from D-erythrose 4-phosphate and phosphoenolpyruvate: step 5/7. In terms of biological role, catalyzes the specific phosphorylation of the 3-hydroxyl group of shikimic acid using ATP as a cosubstrate. In Erwinia tasmaniensis (strain DSM 17950 / CFBP 7177 / CIP 109463 / NCPPB 4357 / Et1/99), this protein is Shikimate kinase 2.